Consider the following 559-residue polypeptide: MAIPGRQYGLILPKKAQQLHPVLQKPSVFGNDSDDDDDETSVSESLQREAAKKQAMKQTKLEIQKALAEDSTVYEYDSIYDEMQKKKEESNPKLLLGKDRKPKYIHNLLKAVEIRKKEQEKRMEKKIQREREMEKGEFDDKEAFVTSAYKKKLQERAEEEERERRAAALEARLDVTKQRDLSGFYRHLLNQAVGEEEVPTCSFREARSEIKEEKSKGYSDEVSSESRIPPENCIRQTGVKVEENPDADSDFDAKSSENDEMEGDKGNCRREKGTETLSSHSKHHRNPARSPSSSEEREHGTQCHTKSSRSRGHEKREDEHQERPAREQDSYHTDRDSRKEKRDSHRHRESSHRDSHWKRHEEERLRGRDERERNDREWKREKDREKYPSREQERHRQRNNYDRHNEKGCEKEEKSKEKEEHVKARKERYENSDKYRDREKREVSVESSERNRDRKESSPNSRAKDRFVNQERASKMRDMEKDKERNPEKPSSSEASLGAKHRITEECQETGKEQERLHETVNKFAKRSNEETVTSARDRYLARQMARINAKTYIEKEDD.

The segment at Val22 to Lys57 is disordered. A phosphoserine mark is found at Ser27 and Ser33. Positions Asp32 to Ser41 are enriched in acidic residues. A coiled-coil region spans residues Ile105 to Arg179. The segment at Asn107–Ala171 is necessary for alternative splicing activity. The interval Glu195–Thr534 is disordered. Basic and acidic residues predominate over residues Arg204–Ser219. A Glycyl lysine isopeptide (Lys-Gly) (interchain with G-Cter in SUMO2) cross-link involves residue Lys211. Ser249, Ser255, and Ser256 each carry phosphoserine. Residues Phe251–Thr274 are compositionally biased toward basic and acidic residues. Thr276 carries the phosphothreonine modification. A Glycyl lysine isopeptide (Lys-Gly) (interchain with G-Cter in SUMO2) cross-link involves residue Lys282. Composition is skewed to basic and acidic residues over residues Glu314–Asp343, Ser351–Glu488, and Arg502–Val521. The stretch at Lys379–Arg428 forms a coiled coil. Ser458 carries the post-translational modification Phosphoserine.

Belongs to the NSRP1 family. Interacts (via C-terminus) with SRSF1. Interacts (via C-terminus) with SRSF2.

It is found in the nucleus. It localises to the nucleus speckle. In terms of biological role, RNA-binding protein that mediates pre-mRNA alternative splicing regulation. This chain is Nuclear speckle splicing regulatory protein 1 (NSRP1), found in Bos taurus (Bovine).